The following is a 158-amino-acid chain: Interleukin-36 alpha (158 aa).

A propeptide spanning residues 1–5 (MEKAL) is cleaved from the precursor. Y96 bears the 3'-nitrotyrosine mark.

This sequence belongs to the IL-1 family. Interacts with TMED10; the interaction mediates the translocation from the cytoplasm into the ERGIC (endoplasmic reticulum-Golgi intermediate compartment) and thereby secretion. N-terminal truncation leads to a dramatic enhancement of its activity (&gt;1000-fold). As to expression, expressed in immune system and fetal brain, but not in other tissues tested or in multiple hematopoietic cell lines. Predominantly expressed in skin keratinocytes but not in fibroblasts, endothelial cells or melanocytes. Increased in lesional psoriasis skin.

The protein resides in the cytoplasm. It is found in the secreted. Cytokine that binds to and signals through the IL1RL2/IL-36R receptor which in turn activates NF-kappa-B and MAPK signaling pathways in target cells linked to a pro-inflammatory response. Part of the IL-36 signaling system that is thought to be present in epithelial barriers and to take part in local inflammatory response; similar to the IL-1 system with which it shares the coreceptor IL1RAP. Seems to be involved in skin inflammatory response by acting on keratinocytes, dendritic cells and indirectly on T-cells to drive tissue infiltration, cell maturation and cell proliferation. In cultured keratinocytes induces the expression of macrophage, T-cell, and neutrophil chemokines, such as CCL3, CCL4, CCL5, CCL2, CCL17, CCL22, CL20, CCL5, CCL2, CCL17, CCL22, CXCL8, CCL20 and CXCL1, and the production of pro-inflammatory cytokines such as TNF-alpha, IL-8 and IL-6. In cultured monocytes up-regulates expression of IL-1A, IL-1B and IL-6. In myeloid dendritic cells involved in cell maturation by up-regulating surface expression of CD83, CD86 and HLA-DR. In monocyte-derived dendritic cells facilitates dendritic cell maturation and drives T-cell proliferation. May play a role in pro-inflammatory effects in the lung. This is Interleukin-36 alpha from Homo sapiens (Human).